The chain runs to 229 residues: Deoxyribose-phosphate aldolase (229 aa).

The active-site Proton donor/acceptor is the aspartate 96. Lysine 166 (schiff-base intermediate with acetaldehyde) is an active-site residue. Lysine 195 (proton donor/acceptor) is an active-site residue.

This sequence belongs to the DeoC/FbaB aldolase family. DeoC type 1 subfamily.

Its subcellular location is the cytoplasm. The catalysed reaction is 2-deoxy-D-ribose 5-phosphate = D-glyceraldehyde 3-phosphate + acetaldehyde. It functions in the pathway carbohydrate degradation; 2-deoxy-D-ribose 1-phosphate degradation; D-glyceraldehyde 3-phosphate and acetaldehyde from 2-deoxy-alpha-D-ribose 1-phosphate: step 2/2. In terms of biological role, catalyzes a reversible aldol reaction between acetaldehyde and D-glyceraldehyde 3-phosphate to generate 2-deoxy-D-ribose 5-phosphate. The chain is Deoxyribose-phosphate aldolase from Micrococcus luteus (strain ATCC 4698 / DSM 20030 / JCM 1464 / CCM 169 / CCUG 5858 / IAM 1056 / NBRC 3333 / NCIMB 9278 / NCTC 2665 / VKM Ac-2230) (Micrococcus lysodeikticus).